We begin with the raw amino-acid sequence, 190 residues long: Peptidoglycan recognition protein 1 (190 aa).

The N-terminal stretch at 1-21 is a signal peptide; it reads MSRRYTPLAWVLLALLGLGAA. Residue glutamine 22 is modified to Pyrrolidone carboxylic acid. Intrachain disulfides connect cysteine 24–cysteine 148, cysteine 40–cysteine 85, and cysteine 61–cysteine 67. An N-acetylmuramoyl-L-alanine amidase domain is found at 46-174; that stretch reads QPVRYVVVSH…RDVQQTLSPG (129 aa).

Belongs to the N-acetylmuramoyl-L-alanine amidase 2 family. Homodimer; disulfide-linked.

Its subcellular location is the secreted. The protein localises to the cytoplasmic granule. In terms of biological role, innate immunity protein that plays several important functions in antimicrobial and antitumor defense systems. Acts as a pattern receptor that binds to murein peptidoglycans (PGN) of Gram-positive bacteria and thus provides bactericidal activity. Forms an equimolar complex with heat shock protein HSPA1A and induces programmed cell death through apoptosis and necroptosis in tumor cell lines by activating the TNFR1 receptor on the target cell membrane. In addition, acts in complex with the Ca(2+)-binding protein S100A4 as a chemoattractant able to induce lymphocyte movement. Mechanistically, this complex acts as a ligand of the chemotactic receptors CCR5 and CXCR3 which are present on the cells of the immune system. Promotes also the activation of lymphocytes that become able to kill virus-infected cells as well as tumor cells by modulating the spectrum of their target-cell specificity. Induction of cytotoxicity on monocyte surface requires interaction with TREM1 receptor. The sequence is that of Peptidoglycan recognition protein 1 (PGLYRP1) from Bos indicus (Zebu).